The chain runs to 485 residues: Probable coniferyl aldehyde dehydrogenase (485 aa).

Residues Glu-226 and Cys-260 contribute to the active site.

It belongs to the aldehyde dehydrogenase family.

It carries out the reaction (E)-coniferaldehyde + NADP(+) + H2O = (E)-ferulate + NADPH + 2 H(+). It catalyses the reaction (E)-coniferaldehyde + NAD(+) + H2O = (E)-ferulate + NADH + 2 H(+). The protein is Probable coniferyl aldehyde dehydrogenase (calB) of Caulobacter vibrioides (strain ATCC 19089 / CIP 103742 / CB 15) (Caulobacter crescentus).